The following is a 444-amino-acid chain: Protein Z-dependent protease inhibitor (444 aa).

A signal peptide spans 1–21 (MKVVPSLLLSVLLAQVWLVPG). The disordered stretch occupies residues 24–65 (PSPQSPETPAPQNQTSRVVQAPKEEEEDEQEASEEKASEEEK). N-linked (GlcNAc...) asparagine glycosylation is present at asparagine 36. Serine 56 is subject to Phosphoserine; by FAM20C. A compositionally biased stretch (basic and acidic residues) spans 56–65 (SEEKASEEEK). The interval 136 to 153 (TKPGLLPSLFKGLRETLS) is heparin-binding. N-linked (GlcNAc...) asparagine glycosylation is found at asparagine 180, asparagine 197, and asparagine 295.

Belongs to the serpin family. Interacts with PROZ. Post-translationally, phosphorylated by FAM20C in the extracellular medium. In terms of tissue distribution, expressed by the liver and secreted in plasma.

It is found in the secreted. Functionally, inhibits activity of the coagulation protease factor Xa in the presence of PROZ, calcium and phospholipids. Also inhibits factor XIa in the absence of cofactors. The protein is Protein Z-dependent protease inhibitor (SERPINA10) of Homo sapiens (Human).